A 424-amino-acid polypeptide reads, in one-letter code: Enolase (424 aa).

Q165 contacts (2R)-2-phosphoglycerate. Residue E207 is the Proton donor of the active site. Residues D244, E283, and D310 each coordinate Mg(2+). Positions 335, 364, 365, and 386 each coordinate (2R)-2-phosphoglycerate. The Proton acceptor role is filled by K335.

This sequence belongs to the enolase family. Mg(2+) serves as cofactor.

The protein resides in the cytoplasm. Its subcellular location is the secreted. It localises to the cell surface. It carries out the reaction (2R)-2-phosphoglycerate = phosphoenolpyruvate + H2O. The protein operates within carbohydrate degradation; glycolysis; pyruvate from D-glyceraldehyde 3-phosphate: step 4/5. Catalyzes the reversible conversion of 2-phosphoglycerate (2-PG) into phosphoenolpyruvate (PEP). It is essential for the degradation of carbohydrates via glycolysis. In Chlamydia trachomatis serovar L2 (strain ATCC VR-902B / DSM 19102 / 434/Bu), this protein is Enolase.